The primary structure comprises 363 residues: tRNA(Met) cytidine acetate ligase (363 aa).

Residues 7–20 (IAEF…HKYL), Gly-96, Asn-152, and Arg-175 each bind ATP.

The protein belongs to the TmcAL family.

Its subcellular location is the cytoplasm. The catalysed reaction is cytidine(34) in elongator tRNA(Met) + acetate + ATP = N(4)-acetylcytidine(34) in elongator tRNA(Met) + AMP + diphosphate. Functionally, catalyzes the formation of N(4)-acetylcytidine (ac(4)C) at the wobble position of elongator tRNA(Met), using acetate and ATP as substrates. First activates an acetate ion to form acetyladenylate (Ac-AMP) and then transfers the acetyl group to tRNA to form ac(4)C34. The protein is tRNA(Met) cytidine acetate ligase of Streptococcus thermophilus (strain CNRZ 1066).